The chain runs to 355 residues: Erythronate-4-phosphate dehydrogenase (355 aa).

The substrate site is built by Ser-45 and Thr-66. Asp-146 contributes to the NAD(+) binding site. Residue Arg-206 is part of the active site. Asp-229 contributes to the NAD(+) binding site. Glu-234 is an active-site residue. Catalysis depends on His-251, which acts as the Proton donor. Residue Gly-254 participates in NAD(+) binding. Position 255 (Tyr-255) interacts with substrate.

This sequence belongs to the D-isomer specific 2-hydroxyacid dehydrogenase family. PdxB subfamily. As to quaternary structure, homodimer.

Its subcellular location is the cytoplasm. The catalysed reaction is 4-phospho-D-erythronate + NAD(+) = (R)-3-hydroxy-2-oxo-4-phosphooxybutanoate + NADH + H(+). Its pathway is cofactor biosynthesis; pyridoxine 5'-phosphate biosynthesis; pyridoxine 5'-phosphate from D-erythrose 4-phosphate: step 2/5. Catalyzes the oxidation of erythronate-4-phosphate to 3-hydroxy-2-oxo-4-phosphonooxybutanoate. The sequence is that of Erythronate-4-phosphate dehydrogenase from Acinetobacter baumannii (strain ATCC 17978 / DSM 105126 / CIP 53.77 / LMG 1025 / NCDC KC755 / 5377).